The primary structure comprises 427 residues: 3-phosphoshikimate 1-carboxyvinyltransferase (427 aa).

3-phosphoshikimate contacts are provided by Lys22, Ser23, and Arg27. Lys22 lines the phosphoenolpyruvate pocket. Gly96 and Arg124 together coordinate phosphoenolpyruvate. Residues Ser169, Ser170, Gln171, Ser197, Asp313, Asn336, and Lys340 each coordinate 3-phosphoshikimate. A phosphoenolpyruvate-binding site is contributed by Gln171. The active-site Proton acceptor is the Asp313. Phosphoenolpyruvate is bound by residues Arg344, Arg386, and Lys411.

This sequence belongs to the EPSP synthase family. Monomer.

The protein localises to the cytoplasm. The enzyme catalyses 3-phosphoshikimate + phosphoenolpyruvate = 5-O-(1-carboxyvinyl)-3-phosphoshikimate + phosphate. Its pathway is metabolic intermediate biosynthesis; chorismate biosynthesis; chorismate from D-erythrose 4-phosphate and phosphoenolpyruvate: step 6/7. Its function is as follows. Catalyzes the transfer of the enolpyruvyl moiety of phosphoenolpyruvate (PEP) to the 5-hydroxyl of shikimate-3-phosphate (S3P) to produce enolpyruvyl shikimate-3-phosphate and inorganic phosphate. The chain is 3-phosphoshikimate 1-carboxyvinyltransferase from Shigella flexneri serotype 5b (strain 8401).